The following is a 222-amino-acid chain: uncharacterized protein (222 aa).

The helical transmembrane segment at 7–26 (ICLVSLICISGIYFGYQYYQ) threads the bilayer. The SPOR domain maps to 139–222 (CRSNAGYKVQ…AYNKQSCVLK (84 aa)).

The protein localises to the membrane. This is an uncharacterized protein from Rickettsia prowazekii (strain Madrid E).